Consider the following 316-residue polypeptide: 4-hydroxy-3-methylbut-2-enyl diphosphate reductase (316 aa).

C12 is a binding site for [4Fe-4S] cluster. Residues H41 and H74 each coordinate (2E)-4-hydroxy-3-methylbut-2-enyl diphosphate. 2 residues coordinate dimethylallyl diphosphate: H41 and H74. 2 residues coordinate isopentenyl diphosphate: H41 and H74. C96 lines the [4Fe-4S] cluster pocket. H124 is a binding site for (2E)-4-hydroxy-3-methylbut-2-enyl diphosphate. Residue H124 coordinates dimethylallyl diphosphate. H124 is a binding site for isopentenyl diphosphate. E126 acts as the Proton donor in catalysis. Residue T167 participates in (2E)-4-hydroxy-3-methylbut-2-enyl diphosphate binding. A [4Fe-4S] cluster-binding site is contributed by C197. (2E)-4-hydroxy-3-methylbut-2-enyl diphosphate is bound by residues S225, S226, N227, and S269. 4 residues coordinate dimethylallyl diphosphate: S225, S226, N227, and S269. Residues S225, S226, N227, and S269 each contribute to the isopentenyl diphosphate site.

The protein belongs to the IspH family. In terms of assembly, homodimer. The cofactor is [4Fe-4S] cluster.

The enzyme catalyses isopentenyl diphosphate + 2 oxidized [2Fe-2S]-[ferredoxin] + H2O = (2E)-4-hydroxy-3-methylbut-2-enyl diphosphate + 2 reduced [2Fe-2S]-[ferredoxin] + 2 H(+). The catalysed reaction is dimethylallyl diphosphate + 2 oxidized [2Fe-2S]-[ferredoxin] + H2O = (2E)-4-hydroxy-3-methylbut-2-enyl diphosphate + 2 reduced [2Fe-2S]-[ferredoxin] + 2 H(+). Its pathway is isoprenoid biosynthesis; dimethylallyl diphosphate biosynthesis; dimethylallyl diphosphate from (2E)-4-hydroxy-3-methylbutenyl diphosphate: step 1/1. The protein operates within isoprenoid biosynthesis; isopentenyl diphosphate biosynthesis via DXP pathway; isopentenyl diphosphate from 1-deoxy-D-xylulose 5-phosphate: step 6/6. Its function is as follows. Catalyzes the conversion of 1-hydroxy-2-methyl-2-(E)-butenyl 4-diphosphate (HMBPP) into a mixture of isopentenyl diphosphate (IPP) and dimethylallyl diphosphate (DMAPP). Acts in the terminal step of the DOXP/MEP pathway for isoprenoid precursor biosynthesis. The polypeptide is 4-hydroxy-3-methylbut-2-enyl diphosphate reductase (Escherichia coli O6:H1 (strain CFT073 / ATCC 700928 / UPEC)).